Consider the following 210-residue polypeptide: Protein GrpE (210 aa).

Residues 1-31 form a disordered region; the sequence is MAKDPQTPTDEELARAERDAEPQPGDATDDE. Residues 12 to 21 show a composition bias toward basic and acidic residues; it reads ELARAERDAE.

The protein belongs to the GrpE family. Homodimer.

The protein resides in the cytoplasm. Functionally, participates actively in the response to hyperosmotic and heat shock by preventing the aggregation of stress-denatured proteins, in association with DnaK and GrpE. It is the nucleotide exchange factor for DnaK and may function as a thermosensor. Unfolded proteins bind initially to DnaJ; upon interaction with the DnaJ-bound protein, DnaK hydrolyzes its bound ATP, resulting in the formation of a stable complex. GrpE releases ADP from DnaK; ATP binding to DnaK triggers the release of the substrate protein, thus completing the reaction cycle. Several rounds of ATP-dependent interactions between DnaJ, DnaK and GrpE are required for fully efficient folding. This chain is Protein GrpE, found in Chromohalobacter salexigens (strain ATCC BAA-138 / DSM 3043 / CIP 106854 / NCIMB 13768 / 1H11).